A 383-amino-acid chain; its full sequence is Erythronate-4-phosphate dehydrogenase (383 aa).

Ser-45 and Thr-66 together coordinate substrate. NAD(+)-binding positions include Asp-146, Thr-174, 205 to 207 (ASR), and Asp-231. Arg-207 is an active-site residue. Glu-236 is an active-site residue. His-253 functions as the Proton donor in the catalytic mechanism. Gly-256 contributes to the NAD(+) binding site. Tyr-257 provides a ligand contact to substrate.

It belongs to the D-isomer specific 2-hydroxyacid dehydrogenase family. PdxB subfamily. As to quaternary structure, homodimer.

It localises to the cytoplasm. It catalyses the reaction 4-phospho-D-erythronate + NAD(+) = (R)-3-hydroxy-2-oxo-4-phosphooxybutanoate + NADH + H(+). Its pathway is cofactor biosynthesis; pyridoxine 5'-phosphate biosynthesis; pyridoxine 5'-phosphate from D-erythrose 4-phosphate: step 2/5. Its function is as follows. Catalyzes the oxidation of erythronate-4-phosphate to 3-hydroxy-2-oxo-4-phosphonooxybutanoate. The polypeptide is Erythronate-4-phosphate dehydrogenase (Pseudomonas entomophila (strain L48)).